The sequence spans 59 residues: uncharacterized protein (59 aa).

This is an uncharacterized protein from Sulfolobus islandicus rod-shaped virus 1 (SIRV-1).